Reading from the N-terminus, the 316-residue chain is ATP synthase gamma chain (316 aa).

The protein belongs to the ATPase gamma chain family. In terms of assembly, F-type ATPases have 2 components, CF(1) - the catalytic core - and CF(0) - the membrane proton channel. CF(1) has five subunits: alpha(3), beta(3), gamma(1), delta(1), epsilon(1). CF(0) has three main subunits: a, b and c.

The protein localises to the cellular thylakoid membrane. In terms of biological role, produces ATP from ADP in the presence of a proton gradient across the membrane. The gamma chain is believed to be important in regulating ATPase activity and the flow of protons through the CF(0) complex. This is ATP synthase gamma chain from Prochlorococcus marinus subsp. pastoris (strain CCMP1986 / NIES-2087 / MED4).